A 1021-amino-acid chain; its full sequence is Phytosulfokine receptor 1 (1021 aa).

The signal sequence occupies residues 1 to 24; sequence MGVLRVYVILILVGFCVQIVVVNS. An LRR 1 repeat occupies 21–43; it reads VVNSQNLTCNSNDLKALEGFMRG. Residues asparagine 26, asparagine 54, and asparagine 83 are each glycosylated (N-linked (GlcNAc...) asparagine). 16 LRR repeats span residues 85 to 109, 110 to 133, 135 to 156, 158 to 180, 181 to 205, 206 to 229, 231 to 252, 253 to 277, 301 to 325, 326 to 349, 351 to 372, 373 to 397, 402 to 426, 428 to 448, 449 to 474, and 476 to 496; these read SGRVVELELGRRKLSGKLSESVAKL, DQLKVLNLTHNSLSGSIAASLLNL, NLEVLDLSSNDFSGLFPSLINL, SLRVLNVYENSFHGLIPASLCNN, LPRIREIDLAMNYFDGSIPVGIGNC, SSVEYLGLASNNLSGSIPQELFQL, NLSVLALQNNRLSGALSSKLGK, LSNLGRLDISSNKFSGKIPDVFLEL, SRSISLLSLRNNTLSGQIYLNCSAM, TNLTSLDLASNSFSGSIPSNLPNC, RLKTINFAKIKFIAQIPESFKN, FQSLTSLSFSNSSIQNISSALEILQ, LKTLVLTLNFQKEELPSVPSLQFKN, KVLIIASCQLRGTVPQWLSNS, PSLQLLDLSWNQLSGTIPPWLGSLNS, and FYLDLSNNTFIGEIPHSLTSL. Asparagine 116 and asparagine 132 each carry an N-linked (GlcNAc...) asparagine glycan. N-linked (GlcNAc...) asparagine glycans are attached at residues asparagine 204, asparagine 217, and asparagine 231. Asparagine 311, asparagine 321, and asparagine 327 each carry an N-linked (GlcNAc...) asparagine glycan. Residues asparagine 383 and asparagine 388 are each glycosylated (N-linked (GlcNAc...) asparagine). N-linked (GlcNAc...) asparagine glycans are attached at residues asparagine 482, asparagine 546, asparagine 568, asparagine 576, and asparagine 592. One copy of the LRR 18; atypical repeat lies at 498–555; it reads SLVSKENAVEEPSPDFPFFKKKNTNAGGLQYNQPSSFPPMIDLSYNSLNGSIWPEFGD. 3 LRR repeats span residues 556-580, 581-604, and 606-629; these read LRQLHVLNLKNNNLSGNIPANLSGM, TSLEVLDLSHNNLSGNIPPSLVKL, and FLSTFSVAYNKLSGPIPTGVQFQT. The N-linked (GlcNAc...) asparagine glycan is linked to asparagine 632. The helical transmembrane segment at 673-693 threads the bilayer; that stretch reads VAVGTGLGTVFLLTVTLLIIL. Positions 743-1014 constitute a Protein kinase domain; the sequence is FNQANIIGCG…PTTQQLVSWL (272 aa). Residues 749-757 and lysine 771 contribute to the ATP site; that span reads IGCGGFGLV. Aspartate 869 serves as the catalytic Proton acceptor.

It belongs to the protein kinase superfamily. Ser/Thr protein kinase family. In terms of processing, N-glycosylated. In terms of tissue distribution, expressed ubiquitously in leaf, apical meristem, hypocotyl and root.

It is found in the cell membrane. It catalyses the reaction L-seryl-[protein] + ATP = O-phospho-L-seryl-[protein] + ADP + H(+). It carries out the reaction L-threonyl-[protein] + ATP = O-phospho-L-threonyl-[protein] + ADP + H(+). In terms of biological role, phytosulfokine receptor with a serine/threonine-protein kinase activity. Regulates, in response to phytosulfokine binding, a signaling cascade involved in plant cell differentiation, organogenesis and somatic embryogenesis. This is Phytosulfokine receptor 1 (PSKR) from Daucus carota (Wild carrot).